Here is a 204-residue protein sequence, read N- to C-terminus: UPF0637 protein SAS1041 (204 aa).

This sequence belongs to the UPF0637 family.

The sequence is that of UPF0637 protein SAS1041 from Staphylococcus aureus (strain MSSA476).